Reading from the N-terminus, the 71-residue chain is UPF0346 protein SP70585_0986 (71 aa).

It belongs to the UPF0346 family.

The sequence is that of UPF0346 protein SP70585_0986 from Streptococcus pneumoniae (strain 70585).